Here is a 524-residue protein sequence, read N- to C-terminus: 2-isopropylmalate synthase (524 aa).

Positions 15 to 277 constitute a Pyruvate carboxyltransferase domain; that stretch reads VVIFDTTMRD…ETKIDTTHIT (263 aa). The Mn(2+) site is built by D24, H212, H214, and N248. The regulatory domain stretch occupies residues 401–524; that stretch reads RVQRLRVVAG…RPEAAIASGF (124 aa).

It belongs to the alpha-IPM synthase/homocitrate synthase family. LeuA type 1 subfamily. Homodimer. Mn(2+) is required as a cofactor.

Its subcellular location is the cytoplasm. It catalyses the reaction 3-methyl-2-oxobutanoate + acetyl-CoA + H2O = (2S)-2-isopropylmalate + CoA + H(+). The protein operates within amino-acid biosynthesis; L-leucine biosynthesis; L-leucine from 3-methyl-2-oxobutanoate: step 1/4. Functionally, catalyzes the condensation of the acetyl group of acetyl-CoA with 3-methyl-2-oxobutanoate (2-ketoisovalerate) to form 3-carboxy-3-hydroxy-4-methylpentanoate (2-isopropylmalate). This chain is 2-isopropylmalate synthase, found in Caulobacter sp. (strain K31).